The sequence spans 175 residues: Viral interleukin-10 homolog (175 aa).

The signal sequence occupies residues 1 to 19; that stretch reads MLSVMVSSSLVLIVFFLGA. Disulfide bonds link Cys37–Cys127 and Cys81–Cys132. The N-linked (GlcNAc...) asparagine; by host glycan is linked to Asn151.

It belongs to the IL-10 family. In terms of assembly, homodimer; disulfide-linked.

The protein localises to the secreted. Its function is as follows. Functional viral IL-10 homolog. Can bind to the human IL-10 receptor and compete with human IL-10 for binding sites. Requires both subunits of the human IL-10 receptor complex to induce signal transduction events and biological activities. IL-10 signaling pathway has several immunosuppressive activities that are exploited by the virus. Inhibits TLR-induced type I interferon production in host plasmacytoid dendritic cells. The polypeptide is Viral interleukin-10 homolog (UL111A) (Human cytomegalovirus (strain AD169) (HHV-5)).